The following is a 341-amino-acid chain: Putative UPF0607 protein FLJ37424 (341 aa).

Disordered stretches follow at residues 72-131 and 216-283; these read PKTE…NPRP and GLLM…LPCL. Over residues 79–101 the composition is skewed to basic and acidic residues; the sequence is EEPKEATEVKDQVETQGQEDNKR. Residues 108-127 show a composition bias toward polar residues; it reads EAASTSRPLETQGNLTSSWY. Basic residues predominate over residues 243–252; that stretch reads AGHRSHKRKL.

Belongs to the UPF0607 family.

In Homo sapiens (Human), this protein is Putative UPF0607 protein FLJ37424.